The primary structure comprises 141 residues: Large ribosomal subunit protein uL16 (141 aa).

The interval 1 to 23 is disordered; it reads MLMPKRTKYRKQMKGRNRGKAHR.

This sequence belongs to the universal ribosomal protein uL16 family. In terms of assembly, part of the 50S ribosomal subunit.

In terms of biological role, binds 23S rRNA and is also seen to make contacts with the A and possibly P site tRNAs. This chain is Large ribosomal subunit protein uL16, found in Helicobacter pylori (strain P12).